Here is a 417-residue protein sequence, read N- to C-terminus: Serine hydroxymethyltransferase (417 aa).

Residues L121 and 125 to 127 (GHL) each bind (6S)-5,6,7,8-tetrahydrofolate. K229 is subject to N6-(pyridoxal phosphate)lysine. Position 355–357 (355–357 (SPF)) interacts with (6S)-5,6,7,8-tetrahydrofolate.

This sequence belongs to the SHMT family. In terms of assembly, homodimer. Pyridoxal 5'-phosphate is required as a cofactor.

It localises to the cytoplasm. It carries out the reaction (6R)-5,10-methylene-5,6,7,8-tetrahydrofolate + glycine + H2O = (6S)-5,6,7,8-tetrahydrofolate + L-serine. Its pathway is one-carbon metabolism; tetrahydrofolate interconversion. It functions in the pathway amino-acid biosynthesis; glycine biosynthesis; glycine from L-serine: step 1/1. In terms of biological role, catalyzes the reversible interconversion of serine and glycine with tetrahydrofolate (THF) serving as the one-carbon carrier. This reaction serves as the major source of one-carbon groups required for the biosynthesis of purines, thymidylate, methionine, and other important biomolecules. Also exhibits THF-independent aldolase activity toward beta-hydroxyamino acids, producing glycine and aldehydes, via a retro-aldol mechanism. The sequence is that of Serine hydroxymethyltransferase from Shewanella baltica (strain OS223).